Reading from the N-terminus, the 375-residue chain is Queuine tRNA-ribosyltransferase (375 aa).

D89 functions as the Proton acceptor in the catalytic mechanism. Residues 89 to 93 (DSGGF), D143, Q187, and G214 contribute to the substrate site. Positions 245–251 (GVGKPED) are RNA binding. The active-site Nucleophile is the D264. Residues 269–273 (TRNAR) form an RNA binding; important for wobble base 34 recognition region. Residues C302, C304, C307, and H333 each contribute to the Zn(2+) site.

This sequence belongs to the queuine tRNA-ribosyltransferase family. As to quaternary structure, homodimer. Within each dimer, one monomer is responsible for RNA recognition and catalysis, while the other monomer binds to the replacement base PreQ1. Zn(2+) is required as a cofactor.

It catalyses the reaction 7-aminomethyl-7-carbaguanine + guanosine(34) in tRNA = 7-aminomethyl-7-carbaguanosine(34) in tRNA + guanine. It functions in the pathway tRNA modification; tRNA-queuosine biosynthesis. Catalyzes the base-exchange of a guanine (G) residue with the queuine precursor 7-aminomethyl-7-deazaguanine (PreQ1) at position 34 (anticodon wobble position) in tRNAs with GU(N) anticodons (tRNA-Asp, -Asn, -His and -Tyr). Catalysis occurs through a double-displacement mechanism. The nucleophile active site attacks the C1' of nucleotide 34 to detach the guanine base from the RNA, forming a covalent enzyme-RNA intermediate. The proton acceptor active site deprotonates the incoming PreQ1, allowing a nucleophilic attack on the C1' of the ribose to form the product. After dissociation, two additional enzymatic reactions on the tRNA convert PreQ1 to queuine (Q), resulting in the hypermodified nucleoside queuosine (7-(((4,5-cis-dihydroxy-2-cyclopenten-1-yl)amino)methyl)-7-deazaguanosine). The chain is Queuine tRNA-ribosyltransferase from Salmonella choleraesuis (strain SC-B67).